Reading from the N-terminus, the 69-residue chain is Large ribosomal subunit protein uL29 (69 aa).

This sequence belongs to the universal ribosomal protein uL29 family.

The chain is Large ribosomal subunit protein uL29 from Staphylococcus saprophyticus subsp. saprophyticus (strain ATCC 15305 / DSM 20229 / NCIMB 8711 / NCTC 7292 / S-41).